The chain runs to 106 residues: MGKTNDWLNFEQLADDKVREELKPPSMYKVILNNDDFTPMEFVIDVLQKFFSYDIERATQLMLTVHYQGKAICGVFTAEVAETKVAHVNKYARDNEHPLLCTLEKA.

It belongs to the ClpS family. Binds to the N-terminal domain of the chaperone ClpA.

Functionally, involved in the modulation of the specificity of the ClpAP-mediated ATP-dependent protein degradation. This chain is ATP-dependent Clp protease adapter protein ClpS, found in Erwinia tasmaniensis (strain DSM 17950 / CFBP 7177 / CIP 109463 / NCPPB 4357 / Et1/99).